The sequence spans 151 residues: Monooxygenase nsrQ (151 aa).

This sequence belongs to the avfA family.

Its pathway is secondary metabolite biosynthesis. Its function is as follows. Monooxygenase; part of the gene cluster that mediates the biosynthesis of the tetrahydroxanthone dimer neosartorin, which exhibits antibacterial activity. The two different monomeric units appear to be synthesized by the same set of enzymes, among which the Baeyer-Villiger monooxygenase nsrF is the key enzyme for the divergence of the biosynthetic routes. The pathway begins with the synthesis of atrochrysone thioester by the polyketide synthase nsrB. The atrochrysone carboxyl ACP thioesterase nsrC then breaks the thioester bond and releases the atrochrysone carboxylic acid from AacuL. Atrochrysone carboxylic acid is decarboxylated by the decarboxylase nsrE, and oxidized by the anthrone oxygenase nsrD to yield emodin. Emodin is then reduced to emodin hydroquinone by the oxidoreductase nsrR. A-ring reduction by the short chain dehydrogenase nsrJ, dehydration by the scytalone dehydratase-like protein nsrI and probable spontaneous re-oxidation, results in overall deoxygenation to chrysophanol. The Baeyer-Villiger monooxygenase nsrF accepts chrysophanol as a substrate to insert one oxygen atom at two different positions to yield the precursors of both monomric units. NsrF is promiscuous/flexible in interacting with the 2 (non methylated and methylated) aromatic rings of chrysophanol, thus diverging the biosynthetic pathway at this point. After the hydrolysis of the lactones, methylesterification by the methyltransferase nsrG yields respectively moniliphenone and 2,2',6'-trihydroxy-4-methyl-6-methoxya-cyldiphenylmethanone. The next steps are the hydroxylation by the FAD-dependent monooxygenase nsrK, followed by isomerization by the monooxygenase nsrQ. The short chain dehydrogenase/reductase nsrO then catalyzes the C-5 ketoreduction to give the xanthone skeleton of blennolide C and 5-acetylblennolide A. The acetyltransferase nsrL has a strict substrate specificity and uses only blennolide A but not blennolide C to yield 5-acetylblennolide A as the single-acetylated product. In the final step of the biosynthesis, the heterodimerization of the 2 xanthones, blennolide C and 5-acetylblennolide A, is catalyzed by the cytochrome P450 monooxygenase nsrP. NsrP can utilize at least three different xanthones as its substrates to perform the dimerization reaction. This chain is Monooxygenase nsrQ, found in Aspergillus novofumigatus (strain IBT 16806).